A 606-amino-acid chain; its full sequence is NADH-ubiquinone oxidoreductase chain 5 (606 aa).

A run of 16 helical transmembrane segments spans residues 1 to 21 (MNLFTSFVLLTLLILFTPIMV), 35 to 55 (YVKNIVFCAFITSLIPAMMYL), 87 to 107 (LMFMPVALFITWSIMEFSMWY), 114 to 134 (INQFFKYLLLFLITMLILVTA), 140 to 160 (LFIGWEGVGIMSFLLIGWWFG), 171 to 191 (AILYNRIGDIGLLASMAWFLS), 211 to 233 (FPLMGLVLAAAGKSAQFGLHPWL), 241 to 261 (TPVSALLHSSTMVVAGIFLLV), 272 to 292 (LIQTVTLCLGAITTLFTAICA), 301 to 320 (IIAFSTSSQLGLMMVTIGLN), 325 to 347 (AFLHICTHAFFKAMLFLCSGSII), 366 to 386 (LPFTTTALIIGCLALTGMPFL), 413 to 433 (LTATSLTAVYSTRIIFFALLG), 457 to 477 (LLIGSIFAGFILSNSIPPVIT), 482 to 502 (MPLHLKLTALTMTTLGFIIAF), and 582 to 602 (GLIKLYFLSFLITITLSMILF).

This sequence belongs to the complex I subunit 5 family. In terms of assembly, core subunit of respiratory chain NADH dehydrogenase (Complex I) which is composed of 45 different subunits.

The protein resides in the mitochondrion inner membrane. It catalyses the reaction a ubiquinone + NADH + 5 H(+)(in) = a ubiquinol + NAD(+) + 4 H(+)(out). Its function is as follows. Core subunit of the mitochondrial membrane respiratory chain NADH dehydrogenase (Complex I) which catalyzes electron transfer from NADH through the respiratory chain, using ubiquinone as an electron acceptor. Essential for the catalytic activity and assembly of complex I. The protein is NADH-ubiquinone oxidoreductase chain 5 (MT-ND5) of Balaenoptera musculus (Blue whale).